A 251-amino-acid chain; its full sequence is MAKEALKTLQSMFGEMVASFVFGFAVYSAILGSSISQSSADKVIVGLTVGFSGIGVIYSFCDVTIAHFNPAITLAAILTSKIDVLQGLGYMLAQYIGFMLAVCALLVCSPVEYKETLDTIRPGPTDFGATSLNVFFAEFFLTAIFVHIVFATAVNPYKPKVDTEGKFVDPDEKEPVDRRITAPLCIGLTLGFLAFMGLASSGGAFNPGLTFAPMAMSNTWSHFWIYLGGQYLGGLTGGLLQVLVLYKLSSD.

Residues M1 to S11 lie on the Cytoplasmic side of the membrane. Residues M12 to G32 traverse the membrane as a helical segment. The Extracellular portion of the chain corresponds to S33–K42. The chain crosses the membrane as a helical span at residues V43–V63. Over T64–Q86 the chain is Cytoplasmic. Residues N69 to A71 carry the NPA motif. A helical transmembrane segment spans residues G87 to V107. Topologically, residues C108 to N133 are extracellular. Residues V134–V154 traverse the membrane as a helical segment. The Cytoplasmic portion of the chain corresponds to N155–R179. Residues I180–S200 traverse the membrane as a helical segment. The Extracellular portion of the chain corresponds to S201 to W224. The NPG motif lies at N206–G208. Residues I225–L245 form a helical membrane-spanning segment. At Y246–D251 the chain is on the cytoplasmic side.

This sequence belongs to the MIP/aquaporin (TC 1.A.8) family.

It localises to the cell membrane. Water channel required to facilitate the transport of water across membranes. Involved in osmotolerance. This is Aquaporin (AQP) from Encephalitozoon intestinalis (Microsporidian parasite).